Here is an 83-residue protein sequence, read N- to C-terminus: Putative defensin-like protein 257 (83 aa).

The first 25 residues, 1-25, serve as a signal peptide directing secretion; that stretch reads MMNVSLKLSFLVFILVIMSNLGSEA. 3 disulfide bridges follow: Cys57–Cys73, Cys63–Cys80, and Cys67–Cys82.

This sequence belongs to the DEFL family.

It localises to the secreted. This Arabidopsis thaliana (Mouse-ear cress) protein is Putative defensin-like protein 257.